A 185-amino-acid chain; its full sequence is Transcriptional repressor NrdR (185 aa).

The tract at residues 1–24 is disordered; sequence MRCPFCGGPDTQVKDSRPSEDSSA. Residues 3–34 fold into a zinc finger; it reads CPFCGGPDTQVKDSRPSEDSSAIRRRRVCPDC. The span at 12 to 24 shows a compositional bias: basic and acidic residues; sequence QVKDSRPSEDSSA. The region spanning 49–139 is the ATP-cone domain; sequence LVVLKRSGKR…VYKNFREAQD (91 aa). The interval 148–185 is disordered; that stretch reads GERLDGEGDLPEQGDAVPAPPDEAVAAPRRGRPARKRA. The segment covering 176–185 has biased composition (basic residues); it reads RRGRPARKRA.

The protein belongs to the NrdR family. Zn(2+) serves as cofactor.

Negatively regulates transcription of bacterial ribonucleotide reductase nrd genes and operons by binding to NrdR-boxes. In Methylorubrum extorquens (strain CM4 / NCIMB 13688) (Methylobacterium extorquens), this protein is Transcriptional repressor NrdR.